Consider the following 545-residue polypeptide: Phospholipase B-like 1 (545 aa).

The signal sequence occupies residues 1-35 (MSRHSQDERLGLPQPPALLPLLLLLLAVAVPLSQA). Asn68 carries an N-linked (GlcNAc...) (high mannose) asparagine; alternate glycan. Asn68 carries N-linked (GlcNAc...) (hybrid) asparagine; alternate glycosylation. Residues 206-224 (LSPTKNSSLKFFKRWDMGH) constitute a propeptide, removed in mature form. N-linked (GlcNAc...) (high mannose) asparagine; alternate glycosylation is found at Asn305, Asn363, and Asn408. N-linked (GlcNAc...) (hybrid) asparagine; alternate glycosylation is found at Asn305, Asn363, and Asn408. 2 cysteine pairs are disulfide-bonded: Cys467-Cys472 and Cys471-Cys486. Asn523 carries an N-linked (GlcNAc...) (high mannose) asparagine; alternate glycan. N-linked (GlcNAc...) (hybrid) asparagine; alternate glycosylation is present at Asn523.

It belongs to the phospholipase B-like family. May form a homodimer, each monomer is composed of a chain A and a chain B. Post-translationally, the maturation cleavages that produces chains A and B are required to open the putative substrate binding pocket. Both chains A and B remain associated in the mature protein.

The protein resides in the lysosome. Functionally, exhibits a weak phospholipase activity, acting on various phospholipids, including phosphatidylcholine, phosphatidylinositol, phosphatidylethanolamine and lysophospholipids. However, in view of the small size of the putative binding pocket, it has been proposed that it may act rather as an amidase or a peptidase. The polypeptide is Phospholipase B-like 1 (PLBD1) (Bos taurus (Bovine)).